A 157-amino-acid polypeptide reads, in one-letter code: MSWTTPKRAFIGAATAEGGTKLNAFDNALLKLGIGNVNLVKLSSVIPAHIEWMEKVHDVPIGMLLPTVYAHIESDEPGMTISAALGVGISKNNEGGLIYEYSGYCTKEEAEEMVRKMVEEGFRQRGWELGEFKVASAEITVKDKPAAAIAVVVMFPY.

Position 44 is a pyruvic acid (Ser) (Ser44).

It belongs to the PdaD family. The cofactor is pyruvate.

The enzyme catalyses L-arginine + H(+) = agmatine + CO2. The protein is Pyruvoyl-dependent arginine decarboxylase of Thermococcus kodakarensis (strain ATCC BAA-918 / JCM 12380 / KOD1) (Pyrococcus kodakaraensis (strain KOD1)).